Consider the following 352-residue polypeptide: UDP-N-acetylglucosamine--N-acetylmuramyl-(pentapeptide) pyrophosphoryl-undecaprenol N-acetylglucosamine transferase (352 aa).

UDP-N-acetyl-alpha-D-glucosamine is bound by residues 12–14, N124, R160, S188, and Q287; that span reads TGG.

It belongs to the glycosyltransferase 28 family. MurG subfamily.

Its subcellular location is the cell inner membrane. The enzyme catalyses di-trans,octa-cis-undecaprenyl diphospho-N-acetyl-alpha-D-muramoyl-L-alanyl-D-glutamyl-meso-2,6-diaminopimeloyl-D-alanyl-D-alanine + UDP-N-acetyl-alpha-D-glucosamine = di-trans,octa-cis-undecaprenyl diphospho-[N-acetyl-alpha-D-glucosaminyl-(1-&gt;4)]-N-acetyl-alpha-D-muramoyl-L-alanyl-D-glutamyl-meso-2,6-diaminopimeloyl-D-alanyl-D-alanine + UDP + H(+). The protein operates within cell wall biogenesis; peptidoglycan biosynthesis. Functionally, cell wall formation. Catalyzes the transfer of a GlcNAc subunit on undecaprenyl-pyrophosphoryl-MurNAc-pentapeptide (lipid intermediate I) to form undecaprenyl-pyrophosphoryl-MurNAc-(pentapeptide)GlcNAc (lipid intermediate II). In Dechloromonas aromatica (strain RCB), this protein is UDP-N-acetylglucosamine--N-acetylmuramyl-(pentapeptide) pyrophosphoryl-undecaprenol N-acetylglucosamine transferase.